Consider the following 130-residue polypeptide: Small ribosomal subunit protein uS9 (130 aa).

It belongs to the universal ribosomal protein uS9 family.

The chain is Small ribosomal subunit protein uS9 from Neisseria meningitidis serogroup C (strain 053442).